We begin with the raw amino-acid sequence, 126 residues long: Large ribosomal subunit protein uL22 (126 aa).

It belongs to the universal ribosomal protein uL22 family. As to quaternary structure, part of the 50S ribosomal subunit.

This protein binds specifically to 23S rRNA; its binding is stimulated by other ribosomal proteins, e.g. L4, L17, and L20. It is important during the early stages of 50S assembly. It makes multiple contacts with different domains of the 23S rRNA in the assembled 50S subunit and ribosome. In terms of biological role, the globular domain of the protein is located near the polypeptide exit tunnel on the outside of the subunit, while an extended beta-hairpin is found that lines the wall of the exit tunnel in the center of the 70S ribosome. The protein is Large ribosomal subunit protein uL22 of Zymomonas mobilis subsp. mobilis (strain ATCC 31821 / ZM4 / CP4).